Consider the following 1307-residue polypeptide: Cyclic nucleotide-gated channel beta-1 (1307 aa).

6 disordered regions span residues 1-101 (MLGW…AQVA), 126-178 (QPVY…TEPS), 193-262 (LPQP…PGDP), 320-458 (DSCW…LDSC), 470-625 (LERA…SQNS), and 648-681 (EKLI…KPAE). Residues 1–720 (MLGWVQRVLP…SIDPLTNLMY (720 aa)) lie on the Cytoplasmic side of the membrane. The span at 43 to 59 (VQPEPEPEPEPAPEEAA) shows a compositional bias: acidic residues. A compositionally biased stretch (basic and acidic residues) spans 165–174 (GSDKTSKTQD). Residues 361-386 (QEEEEEEKEEKEEKEEEEEKEEEEKR) show a composition bias toward acidic residues. Over residues 387-406 (EEEKKKEKEEEKKEKEKEEK) the composition is skewed to basic and acidic residues. Acidic residues-rich tracts occupy residues 407–451 (EEKE…EEEP) and 483–518 (LPEE…EEGE). The segment covering 550 to 560 (TIPPPERPPVS) has biased composition (pro residues). Residues 621 to 631 (ASQNSAIINDR) form a calmodulin-binding CaM1 region. The helical transmembrane segment at 721 to 742 (ILWLFFVVLAWNWNCWLIPVRW) threads the bilayer. Over 743–751 (AFPYQRADN) the chain is Extracellular. The chain crosses the membrane as a helical span at residues 752-773 (IHLWLLMDYLCDFIYLLDITVF). Topologically, residues 774–788 (QMRLQFVKGGDIITD) are cytoplasmic. The helical transmembrane segment at 789–808 (KKEMRNNYLKSQRFKMDLLC) threads the bilayer. Residues 809–824 (LLPLDFLYLKLGVNPL) are Extracellular-facing. The helical transmembrane segment at 825–837 (LRLPRCLKYMAFF) threads the bilayer. The Cytoplasmic portion of the chain corresponds to 838–849 (EFNNRLEAILSK). Residues 850 to 872 (AYVYRVIRTTAYLLYSLHLNSCL) traverse the membrane as a helical segment. Residues 850 to 949 (AYVYRVIRTT…IGQMRDVVGA (100 aa)) are ion conduction pathway. Topologically, residues 873–895 (YYWASAFQGIGSTHWVYDGVGNS) are extracellular. 2 helical membrane passes run 896 to 922 (YIRC…LFEI) and 923 to 948 (VFQL…DVVG). Topologically, residues 949–1307 (AATAGQTYYR…MLEEKKEEVE (359 aa)) are cytoplasmic. The tract at residues 952–1028 (AGQTYYRSCM…NIVSKVALFQ (77 aa)) is C-linker. The interval 1026 to 1130 (LFQGCDRQMI…LDKKDLNEIL (105 aa)) is cNMP-binding domain. The tract at residues 1032–1148 (RQMIFDMLKR…LLRKKARRML (117 aa)) is cyclic nucleotide-binding domain. Residues Gly1093, Glu1094, Ser1096, Arg1106, and Thr1107 each contribute to the 3',5'-cyclic GMP site. Arg1106 serves as a coordination point for 3',5'-cyclic AMP. The interval 1212 to 1218 (QQQLLEQ) is calmodulin-binding CaM2. Over residues 1214-1238 (QLLEQAKSSQEAGGEEGSGATDQPA) the composition is skewed to low complexity. The interval 1214-1307 (QLLEQAKSSQ…MLEEKKEEVE (94 aa)) is disordered. Pro residues predominate over residues 1250 to 1261 (EPPAPSSPPPAS).

It belongs to the cyclic nucleotide-gated cation channel (TC 1.A.1.5) family. CNGB1 subfamily. The rod cyclic nucleotide-gated channel is a heterotetramer composed of CNGA1 and CNGB1 subunits with 3:1 stoichiometry. CNGA1:CNGB1 channel binds Ca(2+)-bound CALM1 via CaM1 and CaM2 regions of the CNGB1 subunit; this interaction modulates the affinity of the channel for cNMPs in response to intracellular Ca(2+) levels. As to quaternary structure, the olfactory cyclic nucleotide-gated channel is a heterotetramer composed of CNGA2, CNGA4 and CNGB1b subunits with 2:1:1 stoichiometry. In terms of tissue distribution, expressed in olfactory sensory cilia (at protein level).

It localises to the cell projection. The protein resides in the cilium membrane. The catalysed reaction is Ca(2+)(in) = Ca(2+)(out). It catalyses the reaction Na(+)(in) = Na(+)(out). It carries out the reaction K(+)(in) = K(+)(out). The enzyme catalyses NH4(+)(in) = NH4(+)(out). The catalysed reaction is Rb(+)(in) = Rb(+)(out). It catalyses the reaction Li(+)(in) = Li(+)(out). It carries out the reaction Cs(+)(in) = Cs(+)(out). Pore-forming subunit of the rod cyclic nucleotide-gated channel. Mediates rod photoresponses at dim light converting transient changes in intracellular cGMP levels into electrical signals. In the dark, cGMP levels are high and keep the channel open enabling a steady inward current carried by Na(+) and Ca(2+) ions that leads to membrane depolarization and neurotransmitter release from synaptic terminals. Upon photon absorption cGMP levels decline leading to channel closure and membrane hyperpolarization that ultimately slows neurotransmitter release and signals the presence of light, the end point of the phototransduction cascade. Conducts cGMP- and cAMP-gated ion currents, with permeability for monovalent and divalent cations. The selectivity for Ca(2+) over Na(+) increases with cGMP concentrations, whereas the selectivity among monovalent ions is independent of the cGMP levels. Functionally, pore-forming subunit of the olfactory cyclic nucleotide-gated channel. Operates in the cilia of olfactory sensory neurons where chemical stimulation of the odorant is converted to an electrical signal. Mediates odorant-induced cAMP-dependent Ca(2+) influx triggering neuron depolarization. The rise of intracellular Ca(2+) levels potentiates the olfactory response by activating Ca(2+)-dependent Cl(-) channels, but it also serves as a negative feedback signal to desensitize the channel for rapid adaptation to odorants. In Rattus norvegicus (Rat), this protein is Cyclic nucleotide-gated channel beta-1.